The sequence spans 461 residues: Elongation factor 1-alpha (461 aa).

G2 is subject to N,N,N-trimethylglycine. The residue at position 3 (K3) is an N6,N6-dimethyllysine; alternate. N6-methyllysine; alternate is present on K3. The 236-residue stretch at 6–241 (KTHINVVVIG…DSIEPPKRPT (236 aa)) folds into the tr-type G domain. The interval 15–22 (GHVDSGKS) is G1. 15 to 22 (GHVDSGKS) lines the GTP pocket. K31 is subject to N6-methyllysine. The tract at residues 71–75 (GITID) is G2. An N6,N6,N6-trimethyllysine modification is found at K80. Positions 92–95 (DAPG) are G3. Residues 92–96 (DAPGH) and 154–157 (NKMD) contribute to the GTP site. Residues 154-157 (NKMD) are G4. The segment at 193-195 (SGF) is G5. N6,N6-dimethyllysine; alternate is present on K317. K317 carries the post-translational modification N6-methyllysine; alternate. K391 bears the N6-methyllysine mark.

This sequence belongs to the TRAFAC class translation factor GTPase superfamily. Classic translation factor GTPase family. EF-Tu/EF-1A subfamily.

It is found in the cytoplasm. This protein promotes the GTP-dependent binding of aminoacyl-tRNA to the A-site of ribosomes during protein biosynthesis. This Pseudoechria curvicolla (Podospora curvicolla) protein is Elongation factor 1-alpha (TEF).